A 79-amino-acid chain; its full sequence is uncharacterized protein (79 aa).

Belongs to the BolA/IbaG family.

This is an uncharacterized protein from Buchnera aphidicola subsp. Baizongia pistaciae (strain Bp).